A 276-amino-acid chain; its full sequence is Phospholipid phosphatase 2 (276 aa).

The Cytoplasmic segment spans residues 1–4 (MERR). The chain crosses the membrane as a helical span at residues 5 to 25 (WVFVLLDVLCVLVASLPFIIL). The Lumenal portion of the chain corresponds to 26–51 (TLVNAPYKRGFYCGDDSIRYPYRPDT). The chain crosses the membrane as a helical span at residues 52 to 72 (ITHGLMAGVIITATVILVSLG). At 73–87 (EAYLVYTDRLYSRSN) the chain is on the cytoplasmic side. Residues 88-108 (FNNYVAAIYKVLGTFLFGAAV) traverse the membrane as a helical segment. Residues 109–161 (SQSLTDLAKYMIGRLRPSFLAVCDPDWSQVNCSGYVQLEVCRGSPANVTEARL) are Lumenal-facing. The segment at 117 to 125 (KYMIGRLRP) is phosphatase sequence motif I. N-linked (GlcNAc...) asparagine glycans are attached at residues Asn-139 and Asn-155. A helical transmembrane segment spans residues 162–182 (SFYSGHSSFGMYCMLFLALYV). The segment at 164–167 (YSGH) is phosphatase sequence motif II. The active-site Proton donors is His-167. At 183 to 189 (QARLCWK) the chain is on the cytoplasmic side. A helical membrane pass occupies residues 190-210 (WARLLRPTVQFFLVAFAIYVG). At 211-218 (YTRVSDHK) the chain is on the lumenal side. The phosphatase sequence motif III stretch occupies residues 212-223 (TRVSDHKHHWSD). His-219 (nucleophile) is an active-site residue. A helical transmembrane segment spans residues 219-239 (HHWSDVLVGLLQGALVACLTV). Topologically, residues 240–276 (RYVSDFFKSRPPQPCQEDEVPERKPSLSLTLTLGDRP) are cytoplasmic. The segment at 251–276 (PQPCQEDEVPERKPSLSLTLTLGDRP) is disordered.

This sequence belongs to the PA-phosphatase related phosphoesterase family. In terms of assembly, forms functional homodimers and homooligomers. Can also form heterooligomers with PLPP1 and PLPP3. Post-translationally, N-glycosylated. In terms of tissue distribution, expressed at high levels in lung, liver and kidney; at low levels in heart and brain, and was not detected in skeletal muscle.

Its subcellular location is the membrane. It is found in the cell membrane. It localises to the early endosome membrane. The protein localises to the endoplasmic reticulum membrane. The catalysed reaction is a 1,2-diacyl-sn-glycero-3-phosphate + H2O = a 1,2-diacyl-sn-glycerol + phosphate. It catalyses the reaction 1,2-dihexadecanoyl-sn-glycero-3-phosphate + H2O = 1,2-dihexadecanoyl-sn-glycerol + phosphate. The enzyme catalyses 1,2-di-(9Z-octadecenoyl)-sn-glycero-3-phosphate + H2O = 1,2-di-(9Z-octadecenoyl)-sn-glycerol + phosphate. It carries out the reaction a monoacyl-sn-glycero-3-phosphate + H2O = a monoacylglycerol + phosphate. The catalysed reaction is (9Z)-octadecenoyl-sn-glycero-3-phosphate + H2O = (9Z-octadecenoyl)-glycerol + phosphate. It catalyses the reaction sphing-4-enine 1-phosphate + H2O = sphing-4-enine + phosphate. The enzyme catalyses an N-acylsphing-4-enine 1-phosphate + H2O = an N-acylsphing-4-enine + phosphate. It carries out the reaction N-(octanoyl)-sphing-4-enine-1-phosphate + H2O = N-octanoylsphing-4-enine + phosphate. The catalysed reaction is N-(9Z-octadecenoyl)-ethanolamine phosphate + H2O = N-(9Z-octadecenoyl) ethanolamine + phosphate. Its pathway is lipid metabolism; phospholipid metabolism. Its activity is regulated as follows. Magnesium-independent phospholipid phosphatase. Insensitive to N-ethylmaleimide. Magnesium-independent phospholipid phosphatase that catalyzes the dephosphorylation of a variety of glycerolipid and sphingolipid phosphate esters including phosphatidate/PA, lysophosphatidate/LPA, sphingosine 1-phosphate/S1P and ceramide 1-phosphate/C1P. Has no apparent extracellular phosphatase activity and therefore most probably acts intracellularly. Also acts on N-oleoyl ethanolamine phosphate/N-(9Z-octadecenoyl)-ethanolamine phosphate, a potential physiological compound. Through dephosphorylation of these bioactive lipid mediators produces new bioactive compounds and may regulate signal transduction in different cellular processes. Indirectly regulates, for instance, cell cycle G1/S phase transition through its phospholipid phosphatase activity. In Mus musculus (Mouse), this protein is Phospholipid phosphatase 2.